A 148-amino-acid chain; its full sequence is SsrA-binding protein (148 aa).

The protein belongs to the SmpB family.

The protein localises to the cytoplasm. In terms of biological role, required for rescue of stalled ribosomes mediated by trans-translation. Binds to transfer-messenger RNA (tmRNA), required for stable association of tmRNA with ribosomes. tmRNA and SmpB together mimic tRNA shape, replacing the anticodon stem-loop with SmpB. tmRNA is encoded by the ssrA gene; the 2 termini fold to resemble tRNA(Ala) and it encodes a 'tag peptide', a short internal open reading frame. During trans-translation Ala-aminoacylated tmRNA acts like a tRNA, entering the A-site of stalled ribosomes, displacing the stalled mRNA. The ribosome then switches to translate the ORF on the tmRNA; the nascent peptide is terminated with the 'tag peptide' encoded by the tmRNA and targeted for degradation. The ribosome is freed to recommence translation, which seems to be the essential function of trans-translation. The polypeptide is SsrA-binding protein (Azoarcus sp. (strain BH72)).